We begin with the raw amino-acid sequence, 202 residues long: Nascent polypeptide-associated complex subunit alpha (202 aa).

A compositionally biased stretch (basic and acidic residues) spans 1–19; that stretch reads MADPRVEEIVEEETPKQTV. Residues 1-41 form a disordered region; the sequence is MADPRVEEIVEEETPKQTVEDAGSDSESEAGEANIPAGAAV. Residues 45–110 form the NAC-A/B domain; the sequence is SRNEKKARKA…AKIEDLNSQA (66 aa). The span at 117-127 shows a compositional bias: low complexity; that stretch reads QLAAAEAAAGE. The segment at 117-165 is disordered; sequence QLAAAEAAAGEHAGHDHEHDLGTKVPEAETKKEEEEDDGEPVDESGLEA. Basic and acidic residues predominate over residues 128-149; the sequence is HAGHDHEHDLGTKVPEAETKKE. Residues 150–162 show a composition bias toward acidic residues; it reads EEEDDGEPVDESG. Positions 163 to 202 constitute a UBA domain; it reads LEAKDIELVMAQANVSRKKAVKALRENDNDIVNSIMALSI.

Belongs to the NAC-alpha family. Part of the nascent polypeptide-associated complex (NAC), consisting of egd2 and egd1. NAC associates with ribosomes via egd1.

Its subcellular location is the cytoplasm. The protein resides in the nucleus. Its function is as follows. Component of the nascent polypeptide-associated complex (NAC), a dynamic component of the ribosomal exit tunnel, protecting the emerging polypeptides from interaction with other cytoplasmic proteins to ensure appropriate nascent protein targeting. The NAC complex also promotes mitochondrial protein import by enhancing productive ribosome interactions with the outer mitochondrial membrane and blocks the inappropriate interaction of ribosomes translating non-secretory nascent polypeptides with translocation sites in the membrane of the endoplasmic reticulum. Egd2 may also be involved in transcription regulation. The sequence is that of Nascent polypeptide-associated complex subunit alpha (egd2) from Aspergillus oryzae (strain ATCC 42149 / RIB 40) (Yellow koji mold).